A 391-amino-acid polypeptide reads, in one-letter code: Decapping nuclease RAI1 (391 aa).

A divalent metal cation is bound at residue E174. Residue E223 coordinates substrate. A divalent metal cation contacts are provided by D225, E244, and L245. Residues K246 and Q270 each coordinate substrate.

Belongs to the DXO/Dom3Z family. As to quaternary structure, interacts with RAT1; the interaction is direct, stabilizes RAT1 protein structure and stimulates its exoribonuclease activity. The interaction also stimulates RAI1 pyrophosphohydrolase activity, probably by recruiting it to mRNA substrates. Requires a divalent metal cation as cofactor.

Its subcellular location is the nucleus. The catalysed reaction is a 5'-end NAD(+)-phospho-ribonucleoside in mRNA + H2O = a 5'-end phospho-ribonucleoside in mRNA + NAD(+) + H(+). The enzyme catalyses a 5'-end (N(7)-methyl 5'-triphosphoguanosine)-ribonucleoside-ribonucleotide in mRNA + H2O = a (N(7)-methyl 5'-triphosphoguanosine)-nucleoside + a 5'-end phospho-ribonucleoside in mRNA + H(+). It catalyses the reaction a 5'-end triphospho-ribonucleoside in mRNA + H2O = a 5'-end phospho-ribonucleoside in mRNA + diphosphate + H(+). Decapping enzyme for NAD-capped RNAs: specifically hydrolyzes the nicotinamide adenine dinucleotide (NAD) cap from a subset of RNAs by removing the entire NAD moiety from the 5'-end of an NAD-capped RNA. The NAD-cap is present at the 5'-end of some RNAs and snoRNAs. In contrast to the canonical 5'-end N7 methylguanosine (m7G) cap, the NAD cap promotes mRNA decay. Also acts as a non-canonical decapping enzyme that removes the entire cap structure of m7G capped or incompletely capped RNAs. Has decapping activity toward incomplete 5'-end m7G cap mRNAs such as unmethylated 5'-end-capped RNA (cap0), while it has no activity toward 2'-O-ribose methylated m7G cap (cap1). Also possesses RNA 5'-pyrophosphohydrolase activity by hydrolyzing the 5'-end triphosphate to release pyrophosphates. Stimulates exoribonuclease activity of Rat1, allowing it to degrade RNAs with stable secondary structure more effectively. The sequence is that of Decapping nuclease RAI1 from Candida albicans (strain SC5314 / ATCC MYA-2876) (Yeast).